The primary structure comprises 136 residues: Large ribosomal subunit protein uL22 (136 aa).

It belongs to the universal ribosomal protein uL22 family. In terms of assembly, part of the 50S ribosomal subunit.

This protein binds specifically to 23S rRNA; its binding is stimulated by other ribosomal proteins, e.g. L4, L17, and L20. It is important during the early stages of 50S assembly. It makes multiple contacts with different domains of the 23S rRNA in the assembled 50S subunit and ribosome. Functionally, the globular domain of the protein is located near the polypeptide exit tunnel on the outside of the subunit, while an extended beta-hairpin is found that lines the wall of the exit tunnel in the center of the 70S ribosome. The protein is Large ribosomal subunit protein uL22 of Parabacteroides distasonis (strain ATCC 8503 / DSM 20701 / CIP 104284 / JCM 5825 / NCTC 11152).